A 49-amino-acid chain; its full sequence is Large ribosomal subunit protein bL33 (49 aa).

This sequence belongs to the bacterial ribosomal protein bL33 family.

The polypeptide is Large ribosomal subunit protein bL33 (Syntrophus aciditrophicus (strain SB)).